The primary structure comprises 332 residues: Glycerol-3-phosphate dehydrogenase [NAD(P)+] (332 aa).

3 residues coordinate NADPH: serine 15, tryptophan 16, and lysine 110. Sn-glycerol 3-phosphate-binding residues include lysine 110, glycine 137, and serine 139. Alanine 141 is a binding site for NADPH. Sn-glycerol 3-phosphate-binding residues include lysine 192, aspartate 245, serine 255, arginine 256, and asparagine 257. Residue lysine 192 is the Proton acceptor of the active site. NADPH is bound at residue arginine 256. Glutamate 282 lines the NADPH pocket.

The protein belongs to the NAD-dependent glycerol-3-phosphate dehydrogenase family.

The protein localises to the cytoplasm. The enzyme catalyses sn-glycerol 3-phosphate + NAD(+) = dihydroxyacetone phosphate + NADH + H(+). It carries out the reaction sn-glycerol 3-phosphate + NADP(+) = dihydroxyacetone phosphate + NADPH + H(+). The protein operates within membrane lipid metabolism; glycerophospholipid metabolism. In terms of biological role, catalyzes the reduction of the glycolytic intermediate dihydroxyacetone phosphate (DHAP) to sn-glycerol 3-phosphate (G3P), the key precursor for phospholipid synthesis. The chain is Glycerol-3-phosphate dehydrogenase [NAD(P)+] from Coxiella burnetii (strain CbuK_Q154) (Coxiella burnetii (strain Q154)).